Here is a 644-residue protein sequence, read N- to C-terminus: uncharacterized protein (644 aa).

Positions 65–117 (DSDVETTGGGGRGSTTSTEDRIDEHDDAIEDDGVSNEEDENQDAEQEQEVDLN) are disordered. Positions 89–114 (HDDAIEDDGVSNEEDENQDAEQEQEV) are enriched in acidic residues.

This is an uncharacterized protein from Arabidopsis thaliana (Mouse-ear cress).